A 710-amino-acid polypeptide reads, in one-letter code: Polyribonucleotide nucleotidyltransferase (710 aa).

Residues Asp-489 and Asp-495 each coordinate Mg(2+). The 60-residue stretch at Pro-556–Ile-615 folds into the KH domain. Residues Gly-625–Lys-693 enclose the S1 motif domain. Residues Ser-691–Asp-710 are disordered. Residues Pro-700 to Asp-710 are compositionally biased toward basic and acidic residues.

The protein belongs to the polyribonucleotide nucleotidyltransferase family. The cofactor is Mg(2+).

The protein resides in the cytoplasm. It catalyses the reaction RNA(n+1) + phosphate = RNA(n) + a ribonucleoside 5'-diphosphate. Involved in mRNA degradation. Catalyzes the phosphorolysis of single-stranded polyribonucleotides processively in the 3'- to 5'-direction. This is Polyribonucleotide nucleotidyltransferase from Streptococcus pyogenes serotype M2 (strain MGAS10270).